Consider the following 188-residue polypeptide: Pyridoxal 5'-phosphate synthase subunit PdxT (188 aa).

47 to 49 serves as a coordination point for L-glutamine; it reads GES. Cysteine 79 serves as the catalytic Nucleophile. Residues arginine 106 and 134 to 135 contribute to the L-glutamine site; that span reads IR. Residues histidine 169 and glutamate 171 each act as charge relay system in the active site.

The protein belongs to the glutaminase PdxT/SNO family. As to quaternary structure, in the presence of PdxS, forms a dodecamer of heterodimers. Only shows activity in the heterodimer.

It catalyses the reaction aldehydo-D-ribose 5-phosphate + D-glyceraldehyde 3-phosphate + L-glutamine = pyridoxal 5'-phosphate + L-glutamate + phosphate + 3 H2O + H(+). The catalysed reaction is L-glutamine + H2O = L-glutamate + NH4(+). It functions in the pathway cofactor biosynthesis; pyridoxal 5'-phosphate biosynthesis. Catalyzes the hydrolysis of glutamine to glutamate and ammonia as part of the biosynthesis of pyridoxal 5'-phosphate. The resulting ammonia molecule is channeled to the active site of PdxS. This Caldicellulosiruptor saccharolyticus (strain ATCC 43494 / DSM 8903 / Tp8T 6331) protein is Pyridoxal 5'-phosphate synthase subunit PdxT.